Consider the following 539-residue polypeptide: Chaperonin GroEL (539 aa).

ATP-binding positions include 29–32 (TIGP), 86–90 (DGTTT), G413, 476–478 (NAA), and D492.

It belongs to the chaperonin (HSP60) family. In terms of assembly, forms a cylinder of 14 subunits composed of two heptameric rings stacked back-to-back. Interacts with the co-chaperonin GroES.

It is found in the cytoplasm. It catalyses the reaction ATP + H2O + a folded polypeptide = ADP + phosphate + an unfolded polypeptide.. Its function is as follows. Together with its co-chaperonin GroES, plays an essential role in assisting protein folding. The GroEL-GroES system forms a nano-cage that allows encapsulation of the non-native substrate proteins and provides a physical environment optimized to promote and accelerate protein folding. In Staphylococcus haemolyticus (strain JCSC1435), this protein is Chaperonin GroEL.